Here is a 302-residue protein sequence, read N- to C-terminus: Protein ECM11 (302 aa).

Disordered regions lie at residues 1 to 67 and 162 to 187; these read MTVI…TDKQ and SLNG…GSYQ. A compositionally biased stretch (polar residues) spans 35–46; that stretch reads NKPPSSINSRSG. Residues 56–67 are compositionally biased toward basic and acidic residues; sequence APEKKINNTDKQ. The span at 162 to 171 shows a compositional bias: polar residues; the sequence is SLNGENTSSP.

As to quaternary structure, interacts with CDC6.

It is found in the nucleus. Functionally, may be involved in cell wall organization and biogenesis. The protein is Protein ECM11 (ECM11) of Saccharomyces cerevisiae (strain ATCC 204508 / S288c) (Baker's yeast).